A 110-amino-acid chain; its full sequence is Large ribosomal subunit protein uL22 (110 aa).

This sequence belongs to the universal ribosomal protein uL22 family. As to quaternary structure, part of the 50S ribosomal subunit.

Its function is as follows. This protein binds specifically to 23S rRNA; its binding is stimulated by other ribosomal proteins, e.g. L4, L17, and L20. It is important during the early stages of 50S assembly. It makes multiple contacts with different domains of the 23S rRNA in the assembled 50S subunit and ribosome. Functionally, the globular domain of the protein is located near the polypeptide exit tunnel on the outside of the subunit, while an extended beta-hairpin is found that lines the wall of the exit tunnel in the center of the 70S ribosome. In Stutzerimonas stutzeri (strain A1501) (Pseudomonas stutzeri), this protein is Large ribosomal subunit protein uL22.